The following is a 473-amino-acid chain: Calcium uptake protein 1, mitochondrial (473 aa).

A mitochondrion-targeting transit peptide spans 1 to 33; the sequence is MFRLRFIPAVAGLAAVSRRYHGVANHARSRRRL. The disordered stretch occupies residues 61 to 101; it reads SSVKHSMREETSEKEKEDADQAVESSDEDQPQEGKKKKARV. Residues 66-79 show a composition bias toward basic and acidic residues; it reads SMREETSEKEKEDA. The segment covering 80–91 has biased composition (acidic residues); that stretch reads DQAVESSDEDQP. The segment at 96-107 is polybasic region; the sequence is KKKARVGFRDRK. Residues 123 to 126 form a k/R-ring region; it reads KIFR. The EF-hand 1 domain occupies 215-250; the sequence is TPQRNFEIAFKMFDLNGDGEVDMEEFEQVQSIIRSQ. 5 residues coordinate Ca(2+): Asp-228, Asn-230, Asp-232, Glu-234, and Glu-239. The k/R-ring stretch occupies residues 256 to 260; the sequence is RHRDR. Positions 405–440 constitute an EF-hand 2 domain; it reads LSDHVCDVVFALFDCDGNGELSNKEFIAIMKQRLMR. Ca(2+)-binding residues include Asp-418, Asp-420, Asn-422, Glu-424, and Glu-429. The tract at residues 452–462 is C-helix region; it reads RLMRAMWKCAQ.

Belongs to the MICU1 family. MICU1 subfamily. Heterodimer; disulfide-linked; heterodimerizes with micu2. Component of the uniplex complex.

The protein resides in the mitochondrion intermembrane space. The protein localises to the mitochondrion inner membrane. Its function is as follows. Calcium sensor of the mitochondrial calcium uniporter (mcu) channel, which senses calcium level via its EF-hand domains. micu1 and micu2 form a disulfide-linked heterodimer that stimulates and inhibits MCU activity, depending on the concentration of calcium. At low calcium levels, micu1 occludes the pore of the MCU channel, preventing mitochondrial calcium uptake. At higher calcium levels, calcium-binding to micu1 and micu2 induces a conformational change that weakens mcu-micu1 interactions and moves the micu1-micu2 heterodimer away from the pore, allowing calcium permeation through the mcu channel. Also required to protect against manganese toxicity by preventing manganese uptake by mcu. This Xenopus tropicalis (Western clawed frog) protein is Calcium uptake protein 1, mitochondrial (micu1).